The chain runs to 4555 residues: Protocadherin Fat 3 (4555 aa).

The N-terminal stretch at 1–31 (MGVTMRHCIDTRPPSCLIFLLLKLCATVSQG) is a signal peptide. The Extracellular portion of the chain corresponds to 32–4153 (LPGTGPLGFH…AGHSYVGKEE (4122 aa)). Cadherin domains lie at 43–157 (THAL…RPLF), 158–265 (SPTT…APII), 263–374 (PIIH…TPIK), 376–471 (EKDV…TPEF), 472–577 (QETL…SPLF), 578–680 (EKVA…SKSF), 726–830 (KSFP…SPVF), 831–935 (LQDS…SPAF), 936–1042 (IPSS…TPYF), 1043–1147 (PDFA…APLT), 1148–1253 (SEPI…KPQF), 1254–1358 (PEKV…SPIP), 1362–1459 (DEPF…GPEF), 1460–1565 (SQPH…SPYF), 1566–1768 (TNPL…PPVF), 1769–1882 (LFSQ…PPVF), 1883–1985 (TQAV…TQSF), 1982–2083 (TQSF…SPVF), 2084–2185 (VGLP…MPVF), 2186–2286 (DKPF…PPVF), 2287–2393 (DQPT…PPVF), 2394–2495 (NQLI…SPAF), 2496–2599 (SQST…APQF), 2600–2707 (MTLE…LPSF), 2708–2813 (TQSQ…KPVF), 2814–2923 (ETSS…APVF), 2924–3028 (AHEV…SPVC), 3029–3130 (DQVA…PPVF), 3131–3235 (SSNH…PPVF), 3236–3340 (ERRD…PPRF), 3341–3445 (SQDV…SPVF), 3446–3550 (TPAN…KPTA), and 3551–3652 (IPLE…TIRF). Residue Asn48 is glycosylated (N-linked (GlcNAc...) asparagine). N-linked (GlcNAc...) asparagine glycosylation is present at Asn341. 7 N-linked (GlcNAc...) asparagine glycosylation sites follow: Asn481, Asn562, Asn667, Asn799, Asn879, Asn898, and Asn1006. N-linked (GlcNAc...) asparagine glycans are attached at residues Asn1367 and Asn1429. A glycan (N-linked (GlcNAc...) asparagine) is linked at Asn1751. Residues Asn1944, Asn1993, and Asn1996 are each glycosylated (N-linked (GlcNAc...) asparagine). 4 N-linked (GlcNAc...) asparagine glycosylation sites follow: Asn2208, Asn2292, Asn2331, and Asn2467. Residue Asn2734 is glycosylated (N-linked (GlcNAc...) asparagine). N-linked (GlcNAc...) asparagine glycosylation occurs at Asn3000. Residue Asn3201 is glycosylated (N-linked (GlcNAc...) asparagine). Asn3449, Asn3618, and Asn3741 each carry an N-linked (GlcNAc...) asparagine glycan. An EGF-like 1 domain is found at 3794–3832 (SNDPCVEKPCPEDMQCVGYEASRRPFLCQCPPGKLGECS). 3 disulfide bridges follow: Cys3798–Cys3809, Cys3803–Cys3821, and Cys3823–Cys3831. The region spanning 3834-4017 (HTSLSFAGNS…VGLTELKLGC (184 aa)) is the Laminin G-like domain. Asn3926 is a glycosylation site (N-linked (GlcNAc...) asparagine). 10 cysteine pairs are disulfide-bonded: Cys3984/Cys4017, Cys4024/Cys4035, Cys4029/Cys4045, Cys4047/Cys4056, Cys4063/Cys4074, Cys4068/Cys4083, Cys4085/Cys4094, Cys4101/Cys4112, Cys4106/Cys4121, and Cys4123/Cys4132. EGF-like domains are found at residues 4020–4057 (YPDACQRSPCLHGGSCSGLPSGGYQCSCLSQFTGTNCE) and 4059–4095 (EITACFPNPCRNGGSCDPIGNTFICSCKAGLTGVTCE). Residues 4097–4133 (DVDECEREECENGGSCVNLFGSFFCNCTPGYVGQYCG) enclose the EGF-like 4; calcium-binding domain. A helical membrane pass occupies residues 4154-4174 (LIGIAVVLFVIFTLIVLFIVF). The Cytoplasmic segment spans residues 4175–4555 (RKKVFRKNYS…FVETQHQTQV (381 aa)). The span at 4326–4343 (SNKGSNSEVQSLNSFQSD) shows a compositional bias: polar residues. 3 disordered regions span residues 4326 to 4347 (SNKGSNSEVQSLNSFQSDSGDD), 4395 to 4424 (GGYDIDSEYPPPHEEEFLSQDQLPPPLPED), and 4452 to 4472 (PRFHPSQYLPPHPLPGETDLG). Arg4508 and Arg4518 each carry omega-N-methylarginine.

Restricted to the nervous system. Abundantly expressed in the fetal brain.

The protein resides in the membrane. May play a role in the interactions between neurites derived from specific subsets of neurons during development. In Rattus norvegicus (Rat), this protein is Protocadherin Fat 3 (Fat3).